The primary structure comprises 170 residues: Putative zinc finger protein 542 (170 aa).

Residues 1-42 (MLENYQNLVWLGLSISKSVISLLEKRKLPWIMAKEEIRGPLP) enclose the KRAB domain. 2 consecutive C2H2-type zinc fingers follow at residues 98–120 (NVCK…KRNH) and 126–148 (NQCL…QRIH). The segment at 154 to 170 (YKCNECIKTFNQRAHLT) adopts a C2H2-type 3; degenerate zinc-finger fold.

This sequence belongs to the krueppel C2H2-type zinc-finger protein family.

Its subcellular location is the nucleus. In terms of biological role, may be involved in transcriptional regulation. This Homo sapiens (Human) protein is Putative zinc finger protein 542 (ZNF542P).